Consider the following 280-residue polypeptide: 23S rRNA (guanine(748)-N(1))-methyltransferase (280 aa).

Residues cysteine 11, cysteine 14, cysteine 27, and histidine 31 each coordinate Zn(2+). S-adenosyl-L-methionine is bound by residues tyrosine 70, 100-101 (TG), and histidine 188.

Belongs to the methyltransferase superfamily. RlmA family.

It catalyses the reaction guanosine(748) in 23S rRNA + S-adenosyl-L-methionine = N(1)-methylguanosine(748) in 23S rRNA + S-adenosyl-L-homocysteine + H(+). Its function is as follows. Specifically methylates the guanosine in position 748 of 23S rRNA. Confers resistance to the macrolide antibiotic tylosine. In Streptomyces fradiae (Streptomyces roseoflavus), this protein is 23S rRNA (guanine(748)-N(1))-methyltransferase (rlmAII).